The chain runs to 605 residues: Glucose-6-phosphate isomerase (605 aa).

Catalysis depends on Glu410, which acts as the Proton donor. Residues His441 and Lys569 contribute to the active site.

It belongs to the GPI family.

Its subcellular location is the cytoplasm. The enzyme catalyses alpha-D-glucose 6-phosphate = beta-D-fructose 6-phosphate. It functions in the pathway carbohydrate degradation; glycolysis; D-glyceraldehyde 3-phosphate and glycerone phosphate from D-glucose: step 2/4. In Leishmania mexicana, this protein is Glucose-6-phosphate isomerase (PGI).